The sequence spans 105 residues: TMEM14 protein homolog YJR085C (105 aa).

3 helical membrane-spanning segments follow: residues 26–46, 53–73, and 77–97; these read IPSL…GYLL, GLEM…IRGM, and FTKP…YYYY.

The protein belongs to the TMEM14 family.

It localises to the mitochondrion. It is found in the membrane. The protein is TMEM14 protein homolog YJR085C of Saccharomyces cerevisiae (strain ATCC 204508 / S288c) (Baker's yeast).